A 328-amino-acid polypeptide reads, in one-letter code: LOB domain-containing protein 27 (328 aa).

Residues 35–136 (GACAACKYQR…EELKAVNSQL (102 aa)) form the LOB domain.

Belongs to the LOB domain-containing protein family.

The sequence is that of LOB domain-containing protein 27 (LBD27) from Arabidopsis thaliana (Mouse-ear cress).